The sequence spans 363 residues: Carbamoyl phosphate synthase small chain (363 aa).

Residues 1–172 (MKAFLVLDNG…TKYIFGTHTG (172 aa)) form a CPSase region. Serine 45, glycine 224, and glycine 226 together coordinate L-glutamine. One can recognise a Glutamine amidotransferase type-1 domain in the interval 176 to 362 (KLAVYDYGVK…YDLVETTKRG (187 aa)). Cysteine 252 acts as the Nucleophile in catalysis. The L-glutamine site is built by leucine 253, glutamine 256, asparagine 294, glycine 296, and phenylalanine 297. Residues histidine 335 and glutamate 337 contribute to the active site.

It belongs to the CarA family. In terms of assembly, composed of two chains; the small (or glutamine) chain promotes the hydrolysis of glutamine to ammonia, which is used by the large (or ammonia) chain to synthesize carbamoyl phosphate. Tetramer of heterodimers (alpha,beta)4.

The enzyme catalyses hydrogencarbonate + L-glutamine + 2 ATP + H2O = carbamoyl phosphate + L-glutamate + 2 ADP + phosphate + 2 H(+). It carries out the reaction L-glutamine + H2O = L-glutamate + NH4(+). It functions in the pathway amino-acid biosynthesis; L-arginine biosynthesis; carbamoyl phosphate from bicarbonate: step 1/1. It participates in pyrimidine metabolism; UMP biosynthesis via de novo pathway; (S)-dihydroorotate from bicarbonate: step 1/3. Functionally, small subunit of the glutamine-dependent carbamoyl phosphate synthetase (CPSase). CPSase catalyzes the formation of carbamoyl phosphate from the ammonia moiety of glutamine, carbonate, and phosphate donated by ATP, constituting the first step of 2 biosynthetic pathways, one leading to arginine and/or urea and the other to pyrimidine nucleotides. The small subunit (glutamine amidotransferase) binds and cleaves glutamine to supply the large subunit with the substrate ammonia. The chain is Carbamoyl phosphate synthase small chain from Leptospira borgpetersenii serovar Hardjo-bovis (strain L550).